Consider the following 297-residue polypeptide: MSDLRQIAFYGKGGIGKSTTSQNTLAALVDLGQKILIVGCDPKADSTRLILNAKAQDTVLHLAAQEGSVEDLELEDVLKAGYKGIKCVESGGPEPGVGCAGRGVITSINFLEENGAYDDVDYVSYDVLGDVVCGGFAMPIRENKAQEIYIVMSGEMMALYAANNIAKGILKYAHSGGVRLGGLICNERQTDRELDLSEALAARLNSKLIHFVPRDNIVQHAELRKMTVIQYAPDSKQAGEYRALAEKIHANSGQGTIPTPITMEELEDMLLDFGIMKSDEQMLAELQAKESAVVAAQ.

An ATP-binding site is contributed by 11 to 18; that stretch reads GKGGIGKS. C99 contributes to the [4Fe-4S] cluster binding site. At R102 the chain carries ADP-ribosylarginine; by dinitrogenase reductase ADP-ribosyltransferase. C133 provides a ligand contact to [4Fe-4S] cluster.

This sequence belongs to the NifH/BchL/ChlL family. As to quaternary structure, homodimer. Requires [4Fe-4S] cluster as cofactor. The reversible ADP-ribosylation of Arg-102 inactivates the nitrogenase reductase and regulates nitrogenase activity.

The catalysed reaction is N2 + 8 reduced [2Fe-2S]-[ferredoxin] + 16 ATP + 16 H2O = H2 + 8 oxidized [2Fe-2S]-[ferredoxin] + 2 NH4(+) + 16 ADP + 16 phosphate + 6 H(+). The key enzymatic reactions in nitrogen fixation are catalyzed by the nitrogenase complex, which has 2 components: the iron protein and the molybdenum-iron protein. The protein is Nitrogenase iron protein (nifH) of Rhizobium etli.